A 344-amino-acid polypeptide reads, in one-letter code: RNA 3'-terminal phosphate cyclase (344 aa).

ATP-binding positions include Gln102 and 284–288 (FLGDQ). Residue His308 is the Tele-AMP-histidine intermediate of the active site.

This sequence belongs to the RNA 3'-terminal cyclase family. Type 1 subfamily.

The protein localises to the cytoplasm. It carries out the reaction a 3'-end 3'-phospho-ribonucleotide-RNA + ATP = a 3'-end 2',3'-cyclophospho-ribonucleotide-RNA + AMP + diphosphate. Its function is as follows. Catalyzes the conversion of 3'-phosphate to a 2',3'-cyclic phosphodiester at the end of RNA. The mechanism of action of the enzyme occurs in 3 steps: (A) adenylation of the enzyme by ATP; (B) transfer of adenylate to an RNA-N3'P to produce RNA-N3'PP5'A; (C) and attack of the adjacent 2'-hydroxyl on the 3'-phosphorus in the diester linkage to produce the cyclic end product. The biological role of this enzyme is unknown but it is likely to function in some aspects of cellular RNA processing. In Thermococcus gammatolerans (strain DSM 15229 / JCM 11827 / EJ3), this protein is RNA 3'-terminal phosphate cyclase.